We begin with the raw amino-acid sequence, 138 residues long: MAKAKKGFSRSDRVAEQIQRELAELTRKGLKDPRAGWITITAVEVTRDYSHAKVYYTVMVDSTREATQEALDSSAGYLRNELGRAIKMFSMPQLHFVYDDSVERGMHLTSLINQVAREDAEKFGEAAAGEAEGEGKAE.

Belongs to the RbfA family. Monomer. Binds 30S ribosomal subunits, but not 50S ribosomal subunits or 70S ribosomes.

The protein resides in the cytoplasm. Functionally, one of several proteins that assist in the late maturation steps of the functional core of the 30S ribosomal subunit. Associates with free 30S ribosomal subunits (but not with 30S subunits that are part of 70S ribosomes or polysomes). Required for efficient processing of 16S rRNA. May interact with the 5'-terminal helix region of 16S rRNA. The chain is Ribosome-binding factor A from Chromobacterium violaceum (strain ATCC 12472 / DSM 30191 / JCM 1249 / CCUG 213 / NBRC 12614 / NCIMB 9131 / NCTC 9757 / MK).